Consider the following 436-residue polypeptide: Adenosylhomocysteinase (436 aa).

Substrate contacts are provided by T62, D136, and E161. 162–164 serves as a coordination point for NAD(+); it reads TTT. The substrate site is built by K191 and D195. NAD(+)-binding positions include N196, 225–230, E248, N283, 304–306, and N352; these read GFGDVG and IGH.

This sequence belongs to the adenosylhomocysteinase family. NAD(+) is required as a cofactor.

The protein localises to the cytoplasm. It catalyses the reaction S-adenosyl-L-homocysteine + H2O = L-homocysteine + adenosine. It functions in the pathway amino-acid biosynthesis; L-homocysteine biosynthesis; L-homocysteine from S-adenosyl-L-homocysteine: step 1/1. Its function is as follows. May play a key role in the regulation of the intracellular concentration of adenosylhomocysteine. This chain is Adenosylhomocysteinase, found in Leptospira borgpetersenii serovar Hardjo-bovis (strain JB197).